Reading from the N-terminus, the 236-residue chain is Rho-related GTP-binding protein RhoV (236 aa).

The disordered stretch occupies residues Met1–Pro27. Positions Glu10 to Pro20 are enriched in pro residues. Ser25 carries the phosphoserine modification. Residues Gly38–Ser45, Asp85–Gln89, and Thr143–Asp146 each bind GTP. Residue Cys234 is the site of S-palmitoyl cysteine attachment.

It belongs to the small GTPase superfamily. Rho family. Interacts with PAK2. The cofactor is Mg(2+).

The protein resides in the cell membrane. It localises to the endosome membrane. In terms of biological role, plays a role in the control of the actin cytoskeleton via activation of the JNK pathway. The sequence is that of Rho-related GTP-binding protein RhoV from Mus musculus (Mouse).